The sequence spans 649 residues: Transcription factor tau 95 kDa subunit (649 aa).

The segment at 1–21 (MPVEEPLATLSSIPDSSADQA) is disordered. The segment covering 9–19 (TLSSIPDSSAD) has biased composition (polar residues). Repeat unit 1 spans residues 221 to 239 (PSTDFQLPPPPKLSMVGFP). The interval 221 to 419 (PSTDFQLPPP…PPLVFESDTP (199 aa)) is 2 X repeats, Pro-rich. The Nuclear localization signal signature appears at 296 to 300 (AKKTK). Repeat 2 spans residues 400–419 (PIVKKNVPKPPPLVFESDTP). A disordered region spans residues 556–612 (IAAGDDFDDNGAITEEPDDAALENEEMDTDQNLKVPASIDDDVDDVDADEEEQESFD). Acidic residues-rich tracts occupy residues 560–584 (DDFDDNGAITEEPDDAALENEEMDT) and 594–610 (IDDDVDDVDADEEEQES). At serine 617 the chain carries Phosphoserine.

Belongs to the TFIIIC subunit 5 family. In terms of assembly, component of the TFIIIC complex composed of TFC1, TFC3, TFC4, TFC6, TFC7 and TFC8. The subunits are organized in two globular domains, tauA and tauB, connected by a proteolysis-sensitive and flexible linker. Interacts with TFC3, TFC4 and TFC6.

The protein localises to the nucleus. Its function is as follows. TFIIIC mediates tRNA and 5S RNA gene activation by binding to intragenic promoter elements. Upstream of the transcription start site, TFIIIC assembles the initiation complex TFIIIB-TFIIIC-tDNA, which is sufficient for RNA polymerase III recruitment and function. Part of the tauA domain of TFIIIC that binds boxA DNA promoter sites of tRNA and similar genes. Participates in the interconnection of tauA with tauB via its contacts with TFC3 and TFC6. Serves as a scaffold critical for tauA-DNA spatial configuration and tauB-DNA stability. The polypeptide is Transcription factor tau 95 kDa subunit (TFC1) (Saccharomyces cerevisiae (strain ATCC 204508 / S288c) (Baker's yeast)).